The following is a 132-amino-acid chain: Large-conductance mechanosensitive channel (132 aa).

A run of 2 helical transmembrane segments spans residues 14–34 (VIDLAVGVVIGAAFGKIVSSL) and 67–87 (GNFIQTIFDFLIIAAAIFMFV).

The protein belongs to the MscL family. In terms of assembly, homopentamer.

It is found in the cell membrane. Channel that opens in response to stretch forces in the membrane lipid bilayer. May participate in the regulation of osmotic pressure changes within the cell. The protein is Large-conductance mechanosensitive channel of Bacillus anthracis (strain A0248).